A 219-amino-acid chain; its full sequence is Octanoyltransferase (219 aa).

Residues 32–207 (SSSPDQLWIV…TFSHNLGYQN (176 aa)) enclose the BPL/LPL catalytic domain. Substrate contacts are provided by residues 71-78 (RGGQVTYH), 138-140 (SLG), and 151-153 (GLA). Residue C169 is the Acyl-thioester intermediate of the active site.

It belongs to the LipB family.

It localises to the cytoplasm. It catalyses the reaction octanoyl-[ACP] + L-lysyl-[protein] = N(6)-octanoyl-L-lysyl-[protein] + holo-[ACP] + H(+). Its pathway is protein modification; protein lipoylation via endogenous pathway; protein N(6)-(lipoyl)lysine from octanoyl-[acyl-carrier-protein]: step 1/2. Catalyzes the transfer of endogenously produced octanoic acid from octanoyl-acyl-carrier-protein onto the lipoyl domains of lipoate-dependent enzymes. Lipoyl-ACP can also act as a substrate although octanoyl-ACP is likely to be the physiological substrate. The chain is Octanoyltransferase from Shewanella woodyi (strain ATCC 51908 / MS32).